The chain runs to 240 residues: MIINAKGPASFAEKYIVRSIWENKFPPGSILPAERELSELIGVTRTTLREVLQRLARDGWLKIQHGKPTRVNNFWETSGLNILETIADLNPEGFPVLVDQLLSARTNVSAIYFRGALRNNPDTAMEVLAQIHQLEDTAESFAEYDYLLHHTLAFSSGNPLYVLILNGFKGLYSRVGRYYFSSSEARQLALNFYKELELLAKAKNYLDVPALMRTYGINSGKMWLQLRDDMPSSIAQQDSH.

One can recognise an HTH gntR-type domain in the interval 6–74 (KGPASFAEKY…HGKPTRVNNF (69 aa)). Residues 34–53 (ERELSELIGVTRTTLREVLQ) constitute a DNA-binding region (H-T-H motif).

Homodimer.

Its subcellular location is the cytoplasm. Its function is as follows. Multifunctional regulator of fatty acid metabolism. The sequence is that of Fatty acid metabolism regulator protein from Shewanella oneidensis (strain ATCC 700550 / JCM 31522 / CIP 106686 / LMG 19005 / NCIMB 14063 / MR-1).